A 435-amino-acid chain; its full sequence is Exopolysaccharide production protein ExoQ (435 aa).

The next 10 membrane-spanning stretches (helical) occupy residues 11-31 (PGAN…VFAY), 35-55 (FGQV…LVDY), 65-85 (YLWI…SAAP), 117-137 (GMIA…TYHY), 156-176 (LGFY…VLGE), 178-198 (GLWM…LLTS), 203-223 (SVLT…ITAL), 230-250 (LLFI…IYAG), 325-345 (VVET…TAFF), and 361-381 (MVLF…IDIL).

It localises to the cell membrane. It participates in glycan metabolism; exopolysaccharide biosynthesis. Functionally, involved in the production of exopolysaccharide. This Rhizobium meliloti (strain 1021) (Ensifer meliloti) protein is Exopolysaccharide production protein ExoQ (exoQ).